The primary structure comprises 304 residues: MAQFLELIKNDSNIDFLGKAKLFFIISGVLIVISLFLIFTKGLNLGIDFSGGTVIQLKYEKPADLNKLRQGIGNLKIGDVSIQNFGNPEEVLIRLGKTRDIPLEELSKTIRAKLAEIDPNNKFIVERVEQVGPQVGSELQYKAMMALLYANIGVLIYVAIRFELIFAIGAILALVHDVIITLGFLSLTSKEFNLTVVAALLALIGYSLNDTIVVFDRIRERIKATANEKINIKDIMNKSINETLSRTIITSLLTFFTVLSLMIFGGEVINPFAFTLVIGIIVGTYSSIGIASGLVYLIKSLRKR.

The next 6 membrane-spanning stretches (helical) occupy residues 20–40, 143–163, 164–184, 195–215, 244–266, and 276–298; these read AKLF…LIFT, AMMA…IRFE, LIFA…TLGF, TVVA…IVVF, LSRT…IFGG, and LVIG…VYLI.

The protein belongs to the SecD/SecF family. SecF subfamily. In terms of assembly, forms a complex with SecD. Part of the essential Sec protein translocation apparatus which comprises SecA, SecYEG and auxiliary proteins SecDF. Other proteins may also be involved.

The protein resides in the cell inner membrane. Its function is as follows. Part of the Sec protein translocase complex. Interacts with the SecYEG preprotein conducting channel. SecDF uses the proton motive force (PMF) to complete protein translocation after the ATP-dependent function of SecA. The sequence is that of Protein translocase subunit SecF from Calditerrivibrio nitroreducens (strain DSM 19672 / NBRC 101217 / Yu37-1).